The sequence spans 451 residues: uncharacterized protein (451 aa).

To ORF5 in pFZ1.

This is an uncharacterized protein from Methanothermobacter thermautotrophicus (Methanobacterium thermoformicicum).